Consider the following 112-residue polypeptide: Nitrogen regulatory protein GlnK (112 aa).

An ADP-binding site is contributed by threonine 29. Glycine 37 is an ATP binding site. Arginine 38–glutamine 39 serves as a coordination point for ADP. Residue tyrosine 51 is modified to O-UMP-tyrosine. ADP-binding positions include alanine 64, glycine 87 to lysine 90, and arginine 101 to arginine 103. ATP-binding positions include alanine 64, glycine 87 to lysine 90, and arginine 101 to arginine 103.

The protein belongs to the P(II) protein family. In terms of assembly, homotrimer. In response to elevation of the extracellular ammonium concentration, interacts and forms a complex with AmtB. Post-translationally, uridylylated/deuridylylated by GlnD. Fully uridylylated in nitrogen-limited conditions and deuridylylated when extracellular ammonium increases.

The protein localises to the cytoplasm. It localises to the cell inner membrane. With respect to regulation, formation of the GlnK-AmtB complex is influenced by intracellular pools of the effector molecules ATP, ADP, Mg(2+) and 2-oxoglutarate. The GlnK-AmtB interaction is also controlled by the level of intracellular glutamine and the uridylylation status of GlnK. Its function is as follows. Involved in the regulation of nitrogen metabolism. Regulates the activity of its targets by protein-protein interaction in response to the nitrogen status of the cell. Involved in the regulation of the ammonium transporter AmtB so as to optimize ammonium uptake under all growth conditions. In nitrogen-limited conditions, GlnK does not interact with AmtB, which remains active and imports ammonium. When extracellular ammonium increases, GlnK associates tightly with AmtB in the inner membrane, thereby inhibiting the transporter activity. The chain is Nitrogen regulatory protein GlnK (glnK) from Escherichia coli O157:H7.